The primary structure comprises 91 residues: UPF0147 protein DKAM_0139 (91 aa).

The protein belongs to the UPF0147 family.

The sequence is that of UPF0147 protein DKAM_0139 from Desulfurococcus amylolyticus (strain DSM 18924 / JCM 16383 / VKM B-2413 / 1221n) (Desulfurococcus kamchatkensis).